A 158-amino-acid polypeptide reads, in one-letter code: AP-1 complex subunit sigma-1A (158 aa).

Position 147 is a phosphoserine (Ser147).

This sequence belongs to the adaptor complexes small subunit family. As to quaternary structure, adaptor protein complex 1 (AP-1) is a heterotetramer composed of two large adaptins (gamma-type subunit AP1G1 and beta-type subunit AP1B1), a medium adaptin (mu-type subunit AP1M1 or AP1M2) and a small adaptin (sigma-type subunit AP1S1 or AP1S2 or AP1S3). In terms of tissue distribution, widely expressed.

It is found in the golgi apparatus. It localises to the cytoplasmic vesicle membrane. Its subcellular location is the membrane. The protein localises to the clathrin-coated pit. Its function is as follows. Subunit of clathrin-associated adaptor protein complex 1 that plays a role in protein sorting in the late-Golgi/trans-Golgi network (TGN) and/or endosomes. The AP complexes mediate both the recruitment of clathrin to membranes and the recognition of sorting signals within the cytosolic tails of transmembrane cargo molecules. The polypeptide is AP-1 complex subunit sigma-1A (AP1S1) (Homo sapiens (Human)).